The chain runs to 87 residues: Small ribosomal subunit protein bS20 (87 aa).

The segment covering 1 to 15 (MANTRSAKKMVRKIA) has biased composition (basic residues). Disordered stretches follow at residues 1 to 22 (MANT…DVNK) and 64 to 87 (KGVT…KAMA).

It belongs to the bacterial ribosomal protein bS20 family.

Functionally, binds directly to 16S ribosomal RNA. In Hyphomonas neptunium (strain ATCC 15444), this protein is Small ribosomal subunit protein bS20.